The following is a 285-amino-acid chain: Probable endonuclease 4 (285 aa).

Residues His68, His108, Glu145, Asp179, His182, His216, Asp229, His231, and Glu261 each coordinate Zn(2+).

Belongs to the AP endonuclease 2 family. Requires Zn(2+) as cofactor.

It catalyses the reaction Endonucleolytic cleavage to 5'-phosphooligonucleotide end-products.. Its function is as follows. Endonuclease IV plays a role in DNA repair. It cleaves phosphodiester bonds at apurinic or apyrimidinic (AP) sites, generating a 3'-hydroxyl group and a 5'-terminal sugar phosphate. This chain is Probable endonuclease 4, found in Geotalea daltonii (strain DSM 22248 / JCM 15807 / FRC-32) (Geobacter daltonii).